The primary structure comprises 806 residues: Centrosomal protein of 85 kDa-like (806 aa).

3 disordered regions span residues 1–27 (MWGR…AGSD), 51–89 (NNHL…LSFK), and 101–146 (HVMP…SSLD). Residue S15 is modified to Phosphoserine. Residues 60-74 (TSDSGDTGIGTSCSD) show a composition bias toward polar residues. The segment covering 135 to 146 (DHSRGERDSSLD) has biased composition (basic and acidic residues). S207 carries the phosphoserine modification. The tract at residues 308–353 (PLEGRTTDDSYSLAPWQQPQTEEFQQGSETPMQVLTGSSRQSYSPP) is disordered. Residues 322–351 (PWQQPQTEEFQQGSETPMQVLTGSSRQSYS) are compositionally biased toward polar residues. A coiled-coil region spans residues 442–644 (QEELEQKLAS…ILEIQSMQGK (203 aa)).

The protein belongs to the CEP85 family.

It is found in the cytoplasm. It localises to the cytoskeleton. Its subcellular location is the microtubule organizing center. The protein resides in the centrosome. Plays an essential role in neuronal cell migration. The protein is Centrosomal protein of 85 kDa-like of Mus musculus (Mouse).